Here is a 256-residue protein sequence, read N- to C-terminus: Imidazole glycerol phosphate synthase subunit HisF (256 aa).

Catalysis depends on residues D12 and D131.

The protein belongs to the HisA/HisF family. As to quaternary structure, heterodimer of HisH and HisF.

The protein localises to the cytoplasm. It catalyses the reaction 5-[(5-phospho-1-deoxy-D-ribulos-1-ylimino)methylamino]-1-(5-phospho-beta-D-ribosyl)imidazole-4-carboxamide + L-glutamine = D-erythro-1-(imidazol-4-yl)glycerol 3-phosphate + 5-amino-1-(5-phospho-beta-D-ribosyl)imidazole-4-carboxamide + L-glutamate + H(+). It participates in amino-acid biosynthesis; L-histidine biosynthesis; L-histidine from 5-phospho-alpha-D-ribose 1-diphosphate: step 5/9. IGPS catalyzes the conversion of PRFAR and glutamine to IGP, AICAR and glutamate. The HisF subunit catalyzes the cyclization activity that produces IGP and AICAR from PRFAR using the ammonia provided by the HisH subunit. This chain is Imidazole glycerol phosphate synthase subunit HisF, found in Micrococcus luteus (strain ATCC 4698 / DSM 20030 / JCM 1464 / CCM 169 / CCUG 5858 / IAM 1056 / NBRC 3333 / NCIMB 9278 / NCTC 2665 / VKM Ac-2230) (Micrococcus lysodeikticus).